The sequence spans 493 residues: Cobyric acid synthase (493 aa).

The GATase cobBQ-type domain maps to Pro-246–Phe-440. Residue Cys-326 is the Nucleophile of the active site. Residue His-432 is part of the active site.

This sequence belongs to the CobB/CobQ family. CobQ subfamily.

Its pathway is cofactor biosynthesis; adenosylcobalamin biosynthesis. In terms of biological role, catalyzes amidations at positions B, D, E, and G on adenosylcobyrinic A,C-diamide. NH(2) groups are provided by glutamine, and one molecule of ATP is hydrogenolyzed for each amidation. This is Cobyric acid synthase from Clostridium botulinum (strain Okra / Type B1).